The sequence spans 185 residues: MILVIGLGNPGKEYQYTRHNIGFIAIEKIANQYNSSFSTKKQFNCEIAETISDGQKIIFIKPTTYMNLSGKSVISVKTYYNINPAKIFVIHDDIDLETCRIKFKTGGGNGGHNGLKSIDGVIGNNYNRIRVGVGRPKNNQDVADYLLNNFLQSEYEIAMQAIDRIVNNFDLILENKLEKFKNKIV.

Tyr-14 contributes to the tRNA binding site. His-19 serves as the catalytic Proton acceptor. Residues Tyr-65, Asn-67, and Asn-113 each coordinate tRNA.

The protein belongs to the PTH family. In terms of assembly, monomer.

The protein resides in the cytoplasm. The enzyme catalyses an N-acyl-L-alpha-aminoacyl-tRNA + H2O = an N-acyl-L-amino acid + a tRNA + H(+). Hydrolyzes ribosome-free peptidyl-tRNAs (with 1 or more amino acids incorporated), which drop off the ribosome during protein synthesis, or as a result of ribosome stalling. Functionally, catalyzes the release of premature peptidyl moieties from peptidyl-tRNA molecules trapped in stalled 50S ribosomal subunits, and thus maintains levels of free tRNAs and 50S ribosomes. The protein is Peptidyl-tRNA hydrolase of Rickettsia akari (strain Hartford).